Reading from the N-terminus, the 330-residue chain is MADLIARLREDGIQKRVIQEGRGELPEFQDGTKATFHFRTLHSDPEGSVIDDSRARGKPMELIIGKKFKLPVWETIVRTMREGETAQFLCDVKHTVLYPLVAKSLRNIAEGKDPLEGQRHCCGIAQMHEHSSLGHADLDALQQNPQPLIFHIEMLKVESPGTYQQDPWAMTDEEKAKAVPLIHQEGNRLYREGQVKEAAAKYYDAIACLKNLQMKEQPGSPDWIQLDLQITPLLLNYCQCKLVAQEYYEVLDHCSSILNKYDDNVKAYFKRGKAHAAVWNAQEAQADFAKVLELDPALAPVVSRELRALEARIRQKDEEDKARFRGIFSH.

The PPIase FKBP-type domain maps to 31-121; sequence GTKATFHFRT…KDPLEGQRHC (91 aa). S43 carries the phosphoserine modification. TPR repeat units lie at residues 179-212, 231-264, and 265-298; these read VPLIHQEGNRLYREGQVKEAAAKYYDAIACLKNL, TPLLLNYCQCKLVAQEYYEVLDHCSSILNKYDDN, and VKAYFKRGKAHAAVWNAQEAQADFAKVLELDPAL.

As to quaternary structure, interacts with RET in the pituitary gland; this interaction prevents the formation of the AIP-survivin complex.

The protein localises to the cytoplasm. May play a positive role in AHR-mediated (aromatic hydrocarbon receptor) signaling, possibly by influencing its receptivity for ligand and/or its nuclear targeting. The chain is AH receptor-interacting protein (Aip) from Rattus norvegicus (Rat).